The following is a 379-amino-acid chain: Queuine tRNA-ribosyltransferase (379 aa).

The active-site Proton acceptor is the aspartate 94. Substrate contacts are provided by residues 94–98, aspartate 148, glutamine 191, and glycine 218; that span reads DSGGF. Residues 249 to 255 form an RNA binding region; that stretch reads GVGSPDA. Catalysis depends on aspartate 268, which acts as the Nucleophile. The segment at 273-277 is RNA binding; important for wobble base 34 recognition; it reads TRIAR. Cysteine 306, cysteine 308, cysteine 311, and histidine 337 together coordinate Zn(2+).

This sequence belongs to the queuine tRNA-ribosyltransferase family. As to quaternary structure, homodimer. Within each dimer, one monomer is responsible for RNA recognition and catalysis, while the other monomer binds to the replacement base PreQ1. The cofactor is Zn(2+).

The catalysed reaction is 7-aminomethyl-7-carbaguanine + guanosine(34) in tRNA = 7-aminomethyl-7-carbaguanosine(34) in tRNA + guanine. The protein operates within tRNA modification; tRNA-queuosine biosynthesis. In terms of biological role, catalyzes the base-exchange of a guanine (G) residue with the queuine precursor 7-aminomethyl-7-deazaguanine (PreQ1) at position 34 (anticodon wobble position) in tRNAs with GU(N) anticodons (tRNA-Asp, -Asn, -His and -Tyr). Catalysis occurs through a double-displacement mechanism. The nucleophile active site attacks the C1' of nucleotide 34 to detach the guanine base from the RNA, forming a covalent enzyme-RNA intermediate. The proton acceptor active site deprotonates the incoming PreQ1, allowing a nucleophilic attack on the C1' of the ribose to form the product. After dissociation, two additional enzymatic reactions on the tRNA convert PreQ1 to queuine (Q), resulting in the hypermodified nucleoside queuosine (7-(((4,5-cis-dihydroxy-2-cyclopenten-1-yl)amino)methyl)-7-deazaguanosine). This chain is Queuine tRNA-ribosyltransferase, found in Staphylococcus aureus (strain bovine RF122 / ET3-1).